The sequence spans 113 residues: UPF0482 protein YnfB (113 aa).

The first 28 residues, 1–28 (MNNTLSKRLCLTAMLTLAAVVYTTSAFA), serve as a signal peptide directing secretion.

This sequence belongs to the UPF0482 family.

The chain is UPF0482 protein YnfB from Salmonella agona (strain SL483).